We begin with the raw amino-acid sequence, 609 residues long: Thiamine metabolism regulatory protein THI3 (609 aa).

The interval 578–598 (SKQVQEENENSSAVNTPTPEF) is disordered.

The protein belongs to the TPP enzyme family. Requires Mg(2+) as cofactor. Thiamine diphosphate serves as cofactor.

The protein localises to the nucleus. It carries out the reaction 4-methyl-2-oxopentanoate + H(+) = 3-methylbutanal + CO2. The catalysed reaction is (S)-3-methyl-2-oxopentanoate + H(+) = 2-methylbutanal + CO2. It functions in the pathway amino-acid degradation; Ehrlich pathway. Functionally, one of five 2-oxo acid decarboxylases (PDC1, PDC5, PDC6, ARO10, and THI3) involved in amino acid catabolism. The enzyme catalyzes the decarboxylation of amino acids, which, in a first step, have been transaminated to the corresponding 2-oxo acids (alpha-keto-acids). In a third step, the resulting aldehydes are reduced to alcohols, collectively referred to as fusel oils or alcohols. Its preferred substrates are the transaminated amino acids derived from leucine (4-methyl-2-oxopentanoate, also alpha-keto-isocaproate) and isoleucine ((3S)-3-methyl-2-oxopentanoate, also alpha-keto-beta-methylvalerate), whereas transaminated valine, transaminated aromatic amino acids, and pyruvate are no substrates. In analogy to the pyruvate decarboxylases the enzyme may in a side-reaction catalyze condensation (or carboligation) reactions leading to the formation of 2-hydroxy ketone, collectively called acyloins. The enzyme is also positively regulating the thiamine metabolism by a molecular mechanism that may involve thiamine concentration sensing and signal transmission. The polypeptide is Thiamine metabolism regulatory protein THI3 (THI3) (Saccharomyces cerevisiae (strain ATCC 204508 / S288c) (Baker's yeast)).